The sequence spans 344 residues: DNA-directed RNA polymerase subunit alpha (344 aa).

The tract at residues 1-238 (MKVIKTAPLI…KQLGVFGERP (238 aa)) is alpha N-terminal domain (alpha-NTD). An alpha C-terminal domain (alpha-CTD) region spans residues 254 to 344 (AKDLSAKIES…EKLEDKGGND (91 aa)).

It belongs to the RNA polymerase alpha chain family. As to quaternary structure, homodimer. The RNAP catalytic core consists of 2 alpha, 1 beta, 1 beta' and 1 omega subunit. When a sigma factor is associated with the core the holoenzyme is formed, which can initiate transcription.

The enzyme catalyses RNA(n) + a ribonucleoside 5'-triphosphate = RNA(n+1) + diphosphate. Functionally, DNA-dependent RNA polymerase catalyzes the transcription of DNA into RNA using the four ribonucleoside triphosphates as substrates. This is DNA-directed RNA polymerase subunit alpha from Helicobacter pylori (strain ATCC 700392 / 26695) (Campylobacter pylori).